The primary structure comprises 144 residues: Large ribosomal subunit protein uL11 (144 aa).

Belongs to the universal ribosomal protein uL11 family. In terms of assembly, part of the ribosomal stalk of the 50S ribosomal subunit. Interacts with L10 and the large rRNA to form the base of the stalk. L10 forms an elongated spine to which L12 dimers bind in a sequential fashion forming a multimeric L10(L12)X complex. One or more lysine residues are methylated.

Its function is as follows. Forms part of the ribosomal stalk which helps the ribosome interact with GTP-bound translation factors. The chain is Large ribosomal subunit protein uL11 from Nocardia farcinica (strain IFM 10152).